The primary structure comprises 101 residues: Small ribosomal subunit protein bS6 (101 aa).

It belongs to the bacterial ribosomal protein bS6 family.

Its function is as follows. Binds together with bS18 to 16S ribosomal RNA. The sequence is that of Small ribosomal subunit protein bS6 from Staphylococcus saprophyticus subsp. saprophyticus (strain ATCC 15305 / DSM 20229 / NCIMB 8711 / NCTC 7292 / S-41).